Consider the following 361-residue polypeptide: Uroporphyrinogen decarboxylase (361 aa).

Substrate contacts are provided by residues 44–48 (RQAGR), D93, Y168, S223, and H337.

The protein belongs to the uroporphyrinogen decarboxylase family. In terms of assembly, homodimer.

The protein resides in the cytoplasm. The enzyme catalyses uroporphyrinogen III + 4 H(+) = coproporphyrinogen III + 4 CO2. It functions in the pathway porphyrin-containing compound metabolism; protoporphyrin-IX biosynthesis; coproporphyrinogen-III from 5-aminolevulinate: step 4/4. Functionally, catalyzes the decarboxylation of four acetate groups of uroporphyrinogen-III to yield coproporphyrinogen-III. The protein is Uroporphyrinogen decarboxylase of Thermobifida fusca (strain YX).